We begin with the raw amino-acid sequence, 294 residues long: Release factor glutamine methyltransferase (294 aa).

The S-adenosyl-L-methionine site is built by E148 and N201. 201–204 contacts substrate; sequence NPPY.

It belongs to the protein N5-glutamine methyltransferase family. PrmC subfamily.

The enzyme catalyses L-glutaminyl-[peptide chain release factor] + S-adenosyl-L-methionine = N(5)-methyl-L-glutaminyl-[peptide chain release factor] + S-adenosyl-L-homocysteine + H(+). Functionally, methylates the class 1 translation termination release factors RF1/PrfA and RF2/PrfB on the glutamine residue of the universally conserved GGQ motif. This Bifidobacterium longum (strain NCC 2705) protein is Release factor glutamine methyltransferase.